Reading from the N-terminus, the 598-residue chain is Elongation factor 4 (598 aa).

The tr-type G domain occupies 2 to 184 (KNIRNFSIIA…RLVKEIPAPE (183 aa)). GTP is bound by residues 14–19 (DHGKST) and 131–134 (NKID).

The protein belongs to the TRAFAC class translation factor GTPase superfamily. Classic translation factor GTPase family. LepA subfamily.

The protein localises to the cell inner membrane. The enzyme catalyses GTP + H2O = GDP + phosphate + H(+). In terms of biological role, required for accurate and efficient protein synthesis under certain stress conditions. May act as a fidelity factor of the translation reaction, by catalyzing a one-codon backward translocation of tRNAs on improperly translocated ribosomes. Back-translocation proceeds from a post-translocation (POST) complex to a pre-translocation (PRE) complex, thus giving elongation factor G a second chance to translocate the tRNAs correctly. Binds to ribosomes in a GTP-dependent manner. This Proteus mirabilis (strain HI4320) protein is Elongation factor 4.